A 209-amino-acid polypeptide reads, in one-letter code: Large ribosomal subunit protein uL4 (209 aa).

Residues 46 to 72 form a disordered region; sequence GTSSTKTRSEVRGSSKKPWKQKGTGRA. Basic residues predominate over residues 59–72; the sequence is SSKKPWKQKGTGRA.

The protein belongs to the universal ribosomal protein uL4 family. As to quaternary structure, part of the 50S ribosomal subunit.

Its function is as follows. One of the primary rRNA binding proteins, this protein initially binds near the 5'-end of the 23S rRNA. It is important during the early stages of 50S assembly. It makes multiple contacts with different domains of the 23S rRNA in the assembled 50S subunit and ribosome. Functionally, forms part of the polypeptide exit tunnel. The protein is Large ribosomal subunit protein uL4 of Borreliella burgdorferi (strain ATCC 35210 / DSM 4680 / CIP 102532 / B31) (Borrelia burgdorferi).